A 112-amino-acid chain; its full sequence is MKSTSLFLCSLLLLLVTGAIGRKTKEKYSQSEEVVSESFASGPSSGSSDDELVRDKPYGPKVSGGSFGEEASEEISSRRSKHISRSSGGSNMEGESSYAKKKRSRFAQDVLN.

A signal peptide spans 1 to 21 (MKSTSLFLCSLLLLLVTGAIG). Residues 26-112 (EKYSQSEEVV…RSRFAQDVLN (87 aa)) form a disordered region. Low complexity-rich tracts occupy residues 36–47 (SESFASGPSSGS) and 85–97 (RSSGGSNMEGESS).

The protein belongs to the SVP2/SVP5/SVP6 family. As to expression, testis.

The protein localises to the secreted. Its subcellular location is the extracellular space. This Rattus norvegicus (Rat) protein is Seminal vesicle secretory protein 4 (Svs4).